Consider the following 158-residue polypeptide: Endoribonuclease YbeY (158 aa).

3 residues coordinate Zn(2+): His-122, His-126, and His-132.

This sequence belongs to the endoribonuclease YbeY family. Requires Zn(2+) as cofactor.

The protein resides in the cytoplasm. In terms of biological role, single strand-specific metallo-endoribonuclease involved in late-stage 70S ribosome quality control and in maturation of the 3' terminus of the 16S rRNA. This is Endoribonuclease YbeY from Bacillus licheniformis (strain ATCC 14580 / DSM 13 / JCM 2505 / CCUG 7422 / NBRC 12200 / NCIMB 9375 / NCTC 10341 / NRRL NRS-1264 / Gibson 46).